We begin with the raw amino-acid sequence, 1899 residues long: Protocadherin-15 (1899 aa).

An N-terminal signal peptide occupies residues 1-26; that stretch reads MLQQFCLWKWLAVGIAVATILASSLA. Topologically, residues 27-1376 are extracellular; the sequence is QNDEDCKLAR…AQAVGYTEGA (1350 aa). A disulfide bridge connects residues cysteine 32 and cysteine 120. Cadherin domains follow at residues 38–147, 148–265, 278–395, 396–509, 510–616, 617–717, 719–819, 820–926, 927–1035, 1037–1144, and 1145–1259; these read GPPA…SPQF, QQQR…GPMF, RPLT…KPYF, TKST…SPTF, SNIS…PPRF, PQLM…GPVF, MFLP…SPVF, TNAS…SPVF, SKTL…IPRF, QDEY…APVF, and TKKM…PPTL. A helical membrane pass occupies residues 1377–1397; that stretch reads LLALAVIIILCCMPAILIVMV. Residues 1398–1899 are Cytoplasmic-facing; it reads SYRQRQAECA…KRFPSQSTAL (502 aa). Disordered regions lie at residues 1668-1687, 1700-1721, and 1734-1820; these read SPCLRSSPLSSPTPCEVVEP, HDYPEELSPPPTRKPTPPSFRI, and TKGE…RREL. Composition is skewed to pro residues over residues 1706–1717 and 1743–1773; these read LSPPPTRKPTPP and PDPPKTPPPPPPLLPPPPPSPPLLPPHPPTL. The segment covering 1774 to 1791 has biased composition (low complexity); it reads PLASVPSSSSLPSTQHLS. A compositionally biased stretch (pro residues) spans 1804–1814; sequence AVPPPAAVPEP.

As to expression, in the utricle, localizes to the distal region of the kinocilium and near the tips of the stereocilia.

The protein localises to the cell membrane. Its function is as follows. Calcium-dependent cell-adhesion protein. Required for inner ear neuroepithelial cell elaboration and cochlear function. Probably involved in the maintenance of normal retinal function. The chain is Protocadherin-15 (Pcdh15) from Gallus gallus (Chicken).